Here is a 599-residue protein sequence, read N- to C-terminus: MSSLSCPTYRSRTSSSSPFLSNHHHSSLINVVDPRRSLSFHYASPQGLNLAELCVVRSQRRSVQSSVVVQDGSVATESSSSEEAKDVGVLTIPSLEADKVVAESDGGEQLSTVSITVVGASGDLAKKKIFPALFALYYEGCLPEHFTIFGYARSKMTDAELRVMVSKTLTCRIDKRANCGEKMEEFLKRCFYHSGQYDSQEHFVALDEKLKEHEGGRLSNRLFYLSIPPNIFVDAVKCASSSASSVNGWTRVIVEKPFGRDSKTSAALTKSLKQYLEEDQIFRIDHYLGKELVENLSVLRFSNLIFEPLWSRQYIRNVQFIFSEDFGTEGRGGYFDNYGIIRDIMQNHLLQILALFAMETPVSLDAEDIRNEKVKVLRSMRPIKLEDVVIGQYKSHSIGGVTYPSYTDDKTVPKGSLTPTFAAAALFIDNARWDGVPFLMKAGKALNTRSAEIRVQFRHVPGNLYNRNSGTDRDQTTNELVIRVQPDEAIYLKINNKVPGLGMRLDQSNLNLLYSARYSKEIPDAYERLLLDAIEGERRLFIRSDELDAAWALFTPLLKEIEEKKTTPEFYPYGSRGPVGAHYLAAKHKVQWGDLSLDQ.

Residues 1–18 are compositionally biased toward low complexity; that stretch reads MSSLSCPTYRSRTSSSSP. A disordered region spans residues 1–23; it reads MSSLSCPTYRSRTSSSSPFLSNH. The transit peptide at 1-66 directs the protein to the chloroplast; that stretch reads MSSLSCPTYR…RSQRRSVQSS (66 aa). Val67 carries the post-translational modification N-acetylvaline. Residues 119-126 and Arg153 contribute to the NADP(+) site; that span reads GASGDLAK. Cys171 and Cys179 form a disulfide bridge. Lys256 is an NADP(+) binding site. D-glucose 6-phosphate is bound by residues Lys256, 286–290, Glu324, and Asp343; that span reads HYLGK. His348 (proton acceptor) is an active-site residue. Lys441 provides a ligand contact to NADP(+). Residues Lys444 and Arg449 each contribute to the D-glucose 6-phosphate site. Arg454 and Arg483 together coordinate NADP(+). Gln485 is a binding site for D-glucose 6-phosphate. NADP(+) is bound by residues 491-493 and Arg576; that span reads YLK.

Belongs to the glucose-6-phosphate dehydrogenase family. Forms homodimer. Interacts with G6PD1. In terms of tissue distribution, expressed in roots, flowers and siliques.

The protein localises to the plastid. Its subcellular location is the chloroplast stroma. The catalysed reaction is D-glucose 6-phosphate + NADP(+) = 6-phospho-D-glucono-1,5-lactone + NADPH + H(+). The protein operates within carbohydrate degradation; pentose phosphate pathway; D-ribulose 5-phosphate from D-glucose 6-phosphate (oxidative stage): step 1/3. Its activity is regulated as follows. Regulated by metabolites. Post-translationally inactivated by cysteine-mediated redox modification via the ferredoxin-thioredoxin system in the light and this avoids futile cycles with photosynthetic CO2 fixation. Its function is as follows. Catalyzes the rate-limiting step of the oxidative pentose-phosphate pathway, which represents a route for the dissimilation of carbohydrates besides glycolysis. The main function of this enzyme is to provide reducing power (NADPH) and pentose phosphates for fatty acid and nucleic acid synthesis which are involved in membrane synthesis and cell division. In Arabidopsis thaliana (Mouse-ear cress), this protein is Glucose-6-phosphate 1-dehydrogenase 3, chloroplastic.